We begin with the raw amino-acid sequence, 132 residues long: MYAENYKIFEAIIDKLREFDGAIIVEGPRDEISLRKLGVRAEIIKLSRLPLAEVALIASQYKEVMILTDLDRKGEELAKKLAMYLEGYGCKVDTETRRSLKMIAKKDIKGIEDLYNLYLRVSLRFWPPEEGI.

One can recognise a Toprim domain in the interval 20 to 100; the sequence is DGAIIVEGPR…KVDTETRRSL (81 aa). Glutamate 26, aspartate 69, and aspartate 71 together coordinate Mg(2+).

This sequence belongs to the UPF0292 family. Requires Mg(2+) as cofactor.

The sequence is that of UPF0292 protein PYRAB04740 from Pyrococcus abyssi (strain GE5 / Orsay).